The sequence spans 257 residues: tRNA (guanine-N(1)-)-methyltransferase (257 aa).

S-adenosyl-L-methionine contacts are provided by residues Gly113 and 133-138 (IGDYVL).

Belongs to the RNA methyltransferase TrmD family. As to quaternary structure, homodimer.

The protein resides in the cytoplasm. It catalyses the reaction guanosine(37) in tRNA + S-adenosyl-L-methionine = N(1)-methylguanosine(37) in tRNA + S-adenosyl-L-homocysteine + H(+). In terms of biological role, specifically methylates guanosine-37 in various tRNAs. The chain is tRNA (guanine-N(1)-)-methyltransferase from Cronobacter sakazakii (strain ATCC BAA-894) (Enterobacter sakazakii).